We begin with the raw amino-acid sequence, 469 residues long: Serine hydroxymethyltransferase, cytosolic (469 aa).

K248 carries the N6-(pyridoxal phosphate)lysine modification.

Belongs to the SHMT family. Homotetramer. Requires pyridoxal 5'-phosphate as cofactor.

It localises to the cytoplasm. The enzyme catalyses (6R)-5,10-methylene-5,6,7,8-tetrahydrofolate + glycine + H2O = (6S)-5,6,7,8-tetrahydrofolate + L-serine. It participates in one-carbon metabolism; tetrahydrofolate interconversion. In terms of biological role, interconversion of serine and glycine. The protein is Serine hydroxymethyltransferase, cytosolic (SHM2) of Candida glabrata (strain ATCC 2001 / BCRC 20586 / JCM 3761 / NBRC 0622 / NRRL Y-65 / CBS 138) (Yeast).